Reading from the N-terminus, the 208-residue chain is Uracil phosphoribosyltransferase (208 aa).

5-phospho-alpha-D-ribose 1-diphosphate is bound by residues Arg-77, Arg-102, and 129–137 (DPMLATGNS). Residues Ile-193 and 198–200 (GDA) each bind uracil. Residue Asp-199 participates in 5-phospho-alpha-D-ribose 1-diphosphate binding.

The protein belongs to the UPRTase family. Mg(2+) is required as a cofactor.

The catalysed reaction is UMP + diphosphate = 5-phospho-alpha-D-ribose 1-diphosphate + uracil. Its pathway is pyrimidine metabolism; UMP biosynthesis via salvage pathway; UMP from uracil: step 1/1. Allosterically activated by GTP. Its function is as follows. Catalyzes the conversion of uracil and 5-phospho-alpha-D-ribose 1-diphosphate (PRPP) to UMP and diphosphate. The sequence is that of Uracil phosphoribosyltransferase from Mycoplasmopsis pulmonis (strain UAB CTIP) (Mycoplasma pulmonis).